The sequence spans 65 residues: Small ribosomal subunit protein bS21 (65 aa).

The interval G45–S65 is disordered. Basic residues predominate over residues K48–Q57.

Belongs to the bacterial ribosomal protein bS21 family.

The chain is Small ribosomal subunit protein bS21 from Chlorobium luteolum (strain DSM 273 / BCRC 81028 / 2530) (Pelodictyon luteolum).